Consider the following 489-residue polypeptide: Protein DETOXIFICATION 26 (489 aa).

The next 12 helical transmembrane spans lie at Ile42–Ile62, Leu75–Gly95, Ile125–Leu145, Leu157–Pro177, Val190–Val210, Ile217–Leu237, Ile271–Val291, Leu300–Gly320, Ile342–Phe362, Val385–Val405, Ile416–Phe436, and Gly442–Ile462.

This sequence belongs to the multi antimicrobial extrusion (MATE) (TC 2.A.66.1) family.

It localises to the membrane. The chain is Protein DETOXIFICATION 26 from Arabidopsis thaliana (Mouse-ear cress).